Consider the following 66-residue polypeptide: Large ribosomal subunit protein uL29 (66 aa).

It belongs to the universal ribosomal protein uL29 family.

The polypeptide is Large ribosomal subunit protein uL29 (Bartonella henselae (strain ATCC 49882 / DSM 28221 / CCUG 30454 / Houston 1) (Rochalimaea henselae)).